Here is a 175-residue protein sequence, read N- to C-terminus: Interleukin-10 (175 aa).

The first 18 residues, 1-18, serve as a signal peptide directing secretion; the sequence is MPSSALLYCLIFLAGVAA. 2 disulfide bridges follow: Cys-26–Cys-122 and Cys-76–Cys-128. N-linked (GlcNAc...) asparagine glycosylation is present at Asn-130.

This sequence belongs to the IL-10 family. In terms of assembly, homodimer. Interacts with IL10RA and IL10RB.

The protein localises to the secreted. Its function is as follows. Major immune regulatory cytokine that acts on many cells of the immune system where it has profound anti-inflammatory functions, limiting excessive tissue disruption caused by inflammation. Mechanistically, IL10 binds to its heterotetrameric receptor comprising IL10RA and IL10RB leading to JAK1 and STAT2-mediated phosphorylation of STAT3. In turn, STAT3 translocates to the nucleus where it drives expression of anti-inflammatory mediators. Targets antigen-presenting cells (APCs) such as macrophages and monocytes and inhibits their release of pro-inflammatory cytokines including granulocyte-macrophage colony-stimulating factor /GM-CSF, granulocyte colony-stimulating factor/G-CSF, IL-1 alpha, IL-1 beta, IL-6, IL-8 and TNF-alpha. Also interferes with antigen presentation by reducing the expression of MHC-class II and co-stimulatory molecules, thereby inhibiting their ability to induce T cell activation. In addition, controls the inflammatory response of macrophages by reprogramming essential metabolic pathways including mTOR signaling. This Sus scrofa (Pig) protein is Interleukin-10 (IL10).